The following is a 413-amino-acid chain: Gamma-glutamyl phosphate reductase (413 aa).

This sequence belongs to the gamma-glutamyl phosphate reductase family.

The protein localises to the cytoplasm. It carries out the reaction L-glutamate 5-semialdehyde + phosphate + NADP(+) = L-glutamyl 5-phosphate + NADPH + H(+). It functions in the pathway amino-acid biosynthesis; L-proline biosynthesis; L-glutamate 5-semialdehyde from L-glutamate: step 2/2. In terms of biological role, catalyzes the NADPH-dependent reduction of L-glutamate 5-phosphate into L-glutamate 5-semialdehyde and phosphate. The product spontaneously undergoes cyclization to form 1-pyrroline-5-carboxylate. This chain is Gamma-glutamyl phosphate reductase, found in Lactococcus lactis subsp. cremoris (strain MG1363).